Reading from the N-terminus, the 251-residue chain is Imidazole glycerol phosphate synthase subunit HisF (251 aa).

Residues Asp11 and Asp130 contribute to the active site.

This sequence belongs to the HisA/HisF family. Heterodimer of HisH and HisF.

It is found in the cytoplasm. The enzyme catalyses 5-[(5-phospho-1-deoxy-D-ribulos-1-ylimino)methylamino]-1-(5-phospho-beta-D-ribosyl)imidazole-4-carboxamide + L-glutamine = D-erythro-1-(imidazol-4-yl)glycerol 3-phosphate + 5-amino-1-(5-phospho-beta-D-ribosyl)imidazole-4-carboxamide + L-glutamate + H(+). The protein operates within amino-acid biosynthesis; L-histidine biosynthesis; L-histidine from 5-phospho-alpha-D-ribose 1-diphosphate: step 5/9. In terms of biological role, IGPS catalyzes the conversion of PRFAR and glutamine to IGP, AICAR and glutamate. The HisF subunit catalyzes the cyclization activity that produces IGP and AICAR from PRFAR using the ammonia provided by the HisH subunit. This chain is Imidazole glycerol phosphate synthase subunit HisF, found in Pelagibacter ubique (strain HTCC1062).